We begin with the raw amino-acid sequence, 133 residues long: Small ribosomal subunit protein uS9 (133 aa).

It belongs to the universal ribosomal protein uS9 family.

This Picrophilus torridus (strain ATCC 700027 / DSM 9790 / JCM 10055 / NBRC 100828 / KAW 2/3) protein is Small ribosomal subunit protein uS9.